The following is a 481-amino-acid chain: Cobyric acid synthase (481 aa).

A GATase cobBQ-type domain is found at 247-433; sequence AFNVVVPLLP…LHGLFDVPDS (187 aa). C328 (nucleophile) is an active-site residue. Residue H425 is part of the active site.

The protein belongs to the CobB/CobQ family. CobQ subfamily.

The protein operates within cofactor biosynthesis; adenosylcobalamin biosynthesis. Functionally, catalyzes amidations at positions B, D, E, and G on adenosylcobyrinic A,C-diamide. NH(2) groups are provided by glutamine, and one molecule of ATP is hydrogenolyzed for each amidation. This is Cobyric acid synthase from Alcanivorax borkumensis (strain ATCC 700651 / DSM 11573 / NCIMB 13689 / SK2).